We begin with the raw amino-acid sequence, 447 residues long: Phosphoglucosamine mutase (447 aa).

The active-site Phosphoserine intermediate is serine 104. Serine 104, aspartate 243, aspartate 245, and aspartate 247 together coordinate Mg(2+). Phosphoserine is present on serine 104.

It belongs to the phosphohexose mutase family. Mg(2+) serves as cofactor. Activated by phosphorylation.

The enzyme catalyses alpha-D-glucosamine 1-phosphate = D-glucosamine 6-phosphate. Its function is as follows. Catalyzes the conversion of glucosamine-6-phosphate to glucosamine-1-phosphate. This is Phosphoglucosamine mutase from Corynebacterium glutamicum (strain R).